We begin with the raw amino-acid sequence, 219 residues long: Response regulator ArlR (219 aa).

The region spanning 3-116 is the Response regulatory domain; that stretch reads QILIVEDEQN…ELLARIRAIL (114 aa). 4-aspartylphosphate is present on aspartate 52. The segment at residues 122-219 is a DNA-binding region (ompR/PhoB-type); sequence KDIIDVNGIT…TVRGVGYVIR (98 aa).

Phosphorylated by ArlS.

Its subcellular location is the cytoplasm. Functionally, member of the two-component regulatory system ArlS/ArlR involved in the regulation of adhesion, autolysis, multidrug resistance and virulence. In Staphylococcus aureus (strain USA300), this protein is Response regulator ArlR (arlR).